The sequence spans 427 residues: Trigger factor (427 aa).

The 86-residue stretch at 163 to 248 folds into the PPIase FKBP-type domain; it reads GDTVVIDFVG…IHEVKAKEVP (86 aa).

This sequence belongs to the FKBP-type PPIase family. Tig subfamily.

The protein resides in the cytoplasm. The catalysed reaction is [protein]-peptidylproline (omega=180) = [protein]-peptidylproline (omega=0). Involved in protein export. Acts as a chaperone by maintaining the newly synthesized protein in an open conformation. Functions as a peptidyl-prolyl cis-trans isomerase. The protein is Trigger factor of Streptococcus pneumoniae serotype 4 (strain ATCC BAA-334 / TIGR4).